Reading from the N-terminus, the 219-residue chain is Thiopurine S-methyltransferase (219 aa).

Residues Trp10, Leu45, Glu66, and Arg130 each contribute to the S-adenosyl-L-methionine site.

It belongs to the class I-like SAM-binding methyltransferase superfamily. TPMT family.

The protein localises to the cytoplasm. The enzyme catalyses S-adenosyl-L-methionine + a thiopurine = S-adenosyl-L-homocysteine + a thiopurine S-methylether.. The sequence is that of Thiopurine S-methyltransferase from Psychrobacter cryohalolentis (strain ATCC BAA-1226 / DSM 17306 / VKM B-2378 / K5).